Consider the following 214-residue polypeptide: NADH-quinone oxidoreductase subunit C (214 aa).

Belongs to the complex I 30 kDa subunit family. In terms of assembly, NDH-1 is composed of 14 different subunits. Subunits NuoB, C, D, E, F, and G constitute the peripheral sector of the complex.

The protein resides in the cell inner membrane. It carries out the reaction a quinone + NADH + 5 H(+)(in) = a quinol + NAD(+) + 4 H(+)(out). NDH-1 shuttles electrons from NADH, via FMN and iron-sulfur (Fe-S) centers, to quinones in the respiratory chain. The immediate electron acceptor for the enzyme in this species is believed to be ubiquinone. Couples the redox reaction to proton translocation (for every two electrons transferred, four hydrogen ions are translocated across the cytoplasmic membrane), and thus conserves the redox energy in a proton gradient. This chain is NADH-quinone oxidoreductase subunit C, found in Francisella tularensis subsp. tularensis (strain WY96-3418).